Reading from the N-terminus, the 474-residue chain is Aspartyl/glutamyl-tRNA(Asn/Gln) amidotransferase subunit B (474 aa).

The protein belongs to the GatB/GatE family. GatB subfamily. Heterotrimer of A, B and C subunits.

The catalysed reaction is L-glutamyl-tRNA(Gln) + L-glutamine + ATP + H2O = L-glutaminyl-tRNA(Gln) + L-glutamate + ADP + phosphate + H(+). It carries out the reaction L-aspartyl-tRNA(Asn) + L-glutamine + ATP + H2O = L-asparaginyl-tRNA(Asn) + L-glutamate + ADP + phosphate + 2 H(+). Functionally, allows the formation of correctly charged Asn-tRNA(Asn) or Gln-tRNA(Gln) through the transamidation of misacylated Asp-tRNA(Asn) or Glu-tRNA(Gln) in organisms which lack either or both of asparaginyl-tRNA or glutaminyl-tRNA synthetases. The reaction takes place in the presence of glutamine and ATP through an activated phospho-Asp-tRNA(Asn) or phospho-Glu-tRNA(Gln). This chain is Aspartyl/glutamyl-tRNA(Asn/Gln) amidotransferase subunit B, found in Methanospirillum hungatei JF-1 (strain ATCC 27890 / DSM 864 / NBRC 100397 / JF-1).